Here is a 658-residue protein sequence, read N- to C-terminus: UvrABC system protein B (658 aa).

One can recognise a Helicase ATP-binding domain in the interval 25–182; sequence DSIRSGNKFN…LKLVDMGYKR (158 aa). 38 to 45 is an ATP binding site; the sequence is GVTGSGKT. The Beta-hairpin signature appears at 91 to 114; the sequence is YYDYYQPEAYIPRQDLFIEKDSSI. Residues 433-596 form the Helicase C-terminal domain; the sequence is QVEVLFDRAK…TPRSASRNLE (164 aa). The UVR domain occupies 623-658; that stretch reads AKIVKELRKQMLEAAKNLEFEKAAALRDEIAKLREL.

This sequence belongs to the UvrB family. As to quaternary structure, forms a heterotetramer with UvrA during the search for lesions. Interacts with UvrC in an incision complex.

The protein resides in the cytoplasm. In terms of biological role, the UvrABC repair system catalyzes the recognition and processing of DNA lesions. A damage recognition complex composed of 2 UvrA and 2 UvrB subunits scans DNA for abnormalities. Upon binding of the UvrA(2)B(2) complex to a putative damaged site, the DNA wraps around one UvrB monomer. DNA wrap is dependent on ATP binding by UvrB and probably causes local melting of the DNA helix, facilitating insertion of UvrB beta-hairpin between the DNA strands. Then UvrB probes one DNA strand for the presence of a lesion. If a lesion is found the UvrA subunits dissociate and the UvrB-DNA preincision complex is formed. This complex is subsequently bound by UvrC and the second UvrB is released. If no lesion is found, the DNA wraps around the other UvrB subunit that will check the other stand for damage. The protein is UvrABC system protein B of Campylobacter fetus subsp. fetus (strain 82-40).